We begin with the raw amino-acid sequence, 456 residues long: tRNA (guanine(37)-N(1))-methyltransferase (456 aa).

S-adenosyl-L-methionine contacts are provided by residues histidine 246, 284–285 (DL), 310–311 (DG), and asparagine 336.

It belongs to the class I-like SAM-binding methyltransferase superfamily. TRM5/TYW2 family. In terms of assembly, monomer.

The protein localises to the mitochondrion matrix. Its subcellular location is the nucleus. The protein resides in the cytoplasm. It catalyses the reaction guanosine(37) in tRNA + S-adenosyl-L-methionine = N(1)-methylguanosine(37) in tRNA + S-adenosyl-L-homocysteine + H(+). Functionally, specifically methylates the N1 position of guanosine-37 in various cytoplasmic and mitochondrial tRNAs. Methylation is not dependent on the nature of the nucleoside 5' of the target nucleoside. This is the first step in the biosynthesis of wybutosine (yW), a modified base adjacent to the anticodon of tRNAs and required for accurate decoding. This chain is tRNA (guanine(37)-N(1))-methyltransferase, found in Ciona intestinalis (Transparent sea squirt).